The sequence spans 311 residues: Probable dihydroorotate dehydrogenase A (fumarate) (311 aa).

Substrate contacts are provided by residues Lys-45, 69 to 73, and Asn-128; that span reads NSMGL. 45–46 provides a ligand contact to FMN; sequence KT. Residue Asn-128 participates in FMN binding. Cys-131 (nucleophile) is an active-site residue. Positions 165 and 193 each coordinate FMN. Substrate is bound at residue 194–195; sequence NS. Residues Gly-220, 248 to 249, and 270 to 271 each bind FMN; these read GG and GT.

This sequence belongs to the dihydroorotate dehydrogenase family. Type 1 subfamily. In terms of assembly, homodimer. FMN is required as a cofactor.

The protein resides in the cytoplasm. It carries out the reaction (S)-dihydroorotate + fumarate = orotate + succinate. It participates in pyrimidine metabolism; UMP biosynthesis via de novo pathway. In terms of biological role, catalyzes the conversion of dihydroorotate to orotate with fumarate as the electron acceptor. This is Probable dihydroorotate dehydrogenase A (fumarate) (pyrDA) from Streptococcus pneumoniae (strain ATCC BAA-255 / R6).